We begin with the raw amino-acid sequence, 122 residues long: Large ribosomal subunit protein uL14 (122 aa).

Belongs to the universal ribosomal protein uL14 family. Part of the 50S ribosomal subunit. Forms a cluster with proteins L3 and L19. In the 70S ribosome, L14 and L19 interact and together make contacts with the 16S rRNA in bridges B5 and B8.

In terms of biological role, binds to 23S rRNA. Forms part of two intersubunit bridges in the 70S ribosome. The polypeptide is Large ribosomal subunit protein uL14 (Bacillus anthracis (strain A0248)).